Consider the following 123-residue polypeptide: Histone H2B (123 aa).

Residues 1–32 form a disordered region; the sequence is MAPKAPGKGAKKAAKSKAPRAPGDRKRKRTRR. The span at 9–18 shows a compositional bias: basic residues; it reads GAKKAAKSKA. O-linked (GlcNAc) serine glycosylation occurs at serine 110. Lysine 118 is covalently cross-linked (Glycyl lysine isopeptide (Lys-Gly) (interchain with G-Cter in ubiquitin)).

Belongs to the histone H2B family. The nucleosome is a histone octamer containing two molecules each of H2A, H2B, H3 and H4 assembled in one H3-H4 heterotetramer and two H2A-H2B heterodimers. The octamer wraps approximately 147 bp of DNA. Post-translationally, monoubiquitination of Lys-118 gives a specific tag for epigenetic transcriptional activation and is also prerequisite for histone H3 'Lys-4' and 'Lys-79' methylation. In terms of processing, glcNAcylation at Ser-110 promotes monoubiquitination of Lys-118. It fluctuates in response to extracellular glucose, and associates with transcribed genes.

The protein resides in the nucleus. It is found in the chromosome. Functionally, core component of nucleosome. Nucleosomes wrap and compact DNA into chromatin, limiting DNA accessibility to the cellular machineries which require DNA as a template. Histones thereby play a central role in transcription regulation, DNA repair, DNA replication and chromosomal stability. DNA accessibility is regulated via a complex set of post-translational modifications of histones, also called histone code, and nucleosome remodeling. This is Histone H2B from Holothuria tubulosa (Tubular sea cucumber).